Consider the following 193-residue polypeptide: Surfactant protein C (193 aa).

Positions 1-23 are excised as a propeptide; it reads MDMSSKEVLMESPPDYSAGPRSQ. Residues cysteine 28 and cysteine 29 are each lipidated (S-palmitoyl cysteine). The propeptide occupies 59–193; sequence HMSQKHTEMV…LCGELPLYYI (135 aa). One can recognise a BRICHOS domain in the interval 94 to 193; sequence FSIGSTGIVV…LCGELPLYYI (100 aa). A disulfide bond links cysteine 121 and cysteine 185. Positions 147-170 are disordered; it reads KPSTPTSKLGQEEGHDTGSESDSS.

It is found in the secreted. It localises to the extracellular space. The protein resides in the surface film. In terms of biological role, pulmonary surfactant associated proteins promote alveolar stability by lowering the surface tension at the air-liquid interface in the peripheral air spaces. The sequence is that of Surfactant protein C from Mus musculus (Mouse).